Here is a 176-residue protein sequence, read N- to C-terminus: Large ribosomal subunit protein uL6 (176 aa).

It belongs to the universal ribosomal protein uL6 family. Part of the 50S ribosomal subunit.

In terms of biological role, this protein binds to the 23S rRNA, and is important in its secondary structure. It is located near the subunit interface in the base of the L7/L12 stalk, and near the tRNA binding site of the peptidyltransferase center. This Burkholderia lata (strain ATCC 17760 / DSM 23089 / LMG 22485 / NCIMB 9086 / R18194 / 383) protein is Large ribosomal subunit protein uL6.